The primary structure comprises 396 residues: MDRSDSEKTDVLPMFKQEYGRYGRQMLVPEFGISGQLDLRSKRILVVGAGGLGSPAIQYLAGAGIGHITIIDDDTVEESNLHRQTIHAGNVNVPKSESAAEFVGKLNPCISVTPMVVRLSPSNSFSVFEGHDLVLDCTDGPAVRYLINDTAVLSGIPVVSASALKTEGQLSIYNYNGGPCYRCLFPIPPPADAVQTCGDGGIMGPVVGMMGMSQAMEAIKLLTGVYSESFTPFLMLYSAYNFPPWKSVKVRKRQKTCAACGDVPRISRQLIETGQVDYSEFCGSPSQVLLGEEHRITPEEYSKIVSTKHILLDVRERPQFDITSFPRSINIPWSELKHKEELDVQVDGSPVYVVCRYGNDSQNAVDKLQKLGIPSKDIKGGLYAWAKNVDEKFPIY.

ATP-binding positions include glycine 51, aspartate 72, 79–83 (SNLHR), lysine 95, and 139–140 (DG). Residues cysteine 180 and cysteine 183 each coordinate Zn(2+). Cysteine 197 (glycyl thioester intermediate; for adenylyltransferase activity) is an active-site residue. Cysteine 257 and cysteine 260 together coordinate Zn(2+). In terms of domain architecture, Rhodanese spans 305–394 (VSTKHILLDV…WAKNVDEKFP (90 aa)). Catalysis depends on cysteine 355, which acts as the Cysteine persulfide intermediate; for sulfurtransferase activity.

The protein in the N-terminal section; belongs to the HesA/MoeB/ThiF family. UBA4 subfamily. The cofactor is Zn(2+).

It localises to the cytoplasm. The protein localises to the cytosol. Its pathway is tRNA modification; 5-methoxycarbonylmethyl-2-thiouridine-tRNA biosynthesis. Its function is as follows. Plays a central role in 2-thiolation of mcm(5)S(2)U at tRNA wobble positions of cytosolic tRNA(Lys), tRNA(Glu) and tRNA(Gln). Acts by mediating the C-terminal thiocarboxylation of sulfur carrier URM1. Its N-terminus first activates URM1 as acyl-adenylate (-COAMP), then the persulfide sulfur on the catalytic cysteine is transferred to URM1 to form thiocarboxylation (-COSH) of its C-terminus. The reaction probably involves hydrogen sulfide that is generated from the persulfide intermediate and that acts as a nucleophile towards URM1. Subsequently, a transient disulfide bond is formed. Does not use thiosulfate as sulfur donor; NFS1 probably acting as a sulfur donor for thiocarboxylation reactions. Prior mcm(5) tRNA modification by the elongator complex is required for 2-thiolation. May also be involved in protein urmylation. The chain is Adenylyltransferase and sulfurtransferase UBA4 from Yarrowia lipolytica (strain CLIB 122 / E 150) (Yeast).